The primary structure comprises 95 residues: UPF0235 protein A2cp1_1215 (95 aa).

It belongs to the UPF0235 family.

The sequence is that of UPF0235 protein A2cp1_1215 from Anaeromyxobacter dehalogenans (strain 2CP-1 / ATCC BAA-258).